A 491-amino-acid polypeptide reads, in one-letter code: Keratin, type I cytoskeletal 24 (491 aa).

Positions 1 to 23 (MFCSAQKGSCSSRVSSSGAVGSR) are disordered. The head stretch occupies residues 1 to 117 (MFCSAQKGSC…GYDGGLLSGS (117 aa)). The segment covering 8–23 (GSCSSRVSSSGAVGSR) has biased composition (low complexity). Positions 118-153 (EKQTMQGLNDRLANYLDKVRALEEANTDLETKIKDW) are coil 1A. Positions 118-432 (EKQTMQGLND…RLLNGDGGGC (315 aa)) constitute an IF rod domain. The segment at 154-174 (YGRHGSGKDGPGRDYSQYCSV) is linker 1. A coil 1B region spans residues 175 to 266 (IEDLKNQIIS…KNHEEEMKCL (92 aa)). Residues 267 to 289 (QGSSGGDVTVEMNATPGTDLTKL) form a linker 12 region. Residues 290-428 (LNDMRAQYEA…ETYRRLLNGD (139 aa)) form a coil 2 region. A tail region spans residues 429–491 (GGGCDYRNLV…VSNISEVKIK (63 aa)).

This sequence belongs to the intermediate filament family. Heterotetramer of two type I and two type II keratins.

This Rattus norvegicus (Rat) protein is Keratin, type I cytoskeletal 24 (Krt24).